The chain runs to 234 residues: Large ribosomal subunit protein uL1 (234 aa).

The protein belongs to the universal ribosomal protein uL1 family. As to quaternary structure, part of the 50S ribosomal subunit.

Binds directly to 23S rRNA. The L1 stalk is quite mobile in the ribosome, and is involved in E site tRNA release. Its function is as follows. Protein L1 is also a translational repressor protein, it controls the translation of the L11 operon by binding to its mRNA. The sequence is that of Large ribosomal subunit protein uL1 from Pectobacterium carotovorum subsp. carotovorum (strain PC1).